The following is a 253-amino-acid chain: Sulfate transporter CysZ (253 aa).

The next 4 membrane-spanning stretches (helical) occupy residues 31–51 (FVIL…WWLF), 75–95 (LLWP…FSTI), 151–171 (IVLL…PVLW), and 222–242 (IPLL…AMWV).

It belongs to the CysZ family.

The protein localises to the cell inner membrane. High affinity, high specificity proton-dependent sulfate transporter, which mediates sulfate uptake. Provides the sulfur source for the cysteine synthesis pathway. This is Sulfate transporter CysZ from Escherichia coli O8 (strain IAI1).